The sequence spans 142 residues: HTH-type transcriptional regulator MntR (142 aa).

The 63-residue stretch at 1–63 folds into the HTH dtxR-type domain; sequence MPTPSMEDYI…YEKYRGLILT (63 aa). Positions 8, 11, 77, 99, 102, and 103 each coordinate Mn(2+).

Belongs to the DtxR/MntR family. Homodimer.

It localises to the cytoplasm. With respect to regulation, DNA binding is strongly activated by Mn(2+). Central regulator of manganese homeostasis. This chain is HTH-type transcriptional regulator MntR, found in Listeria monocytogenes serotype 4b (strain F2365).